A 396-amino-acid chain; its full sequence is 8-amino-7-oxononanoate synthase (396 aa).

Residue R19 participates in substrate binding. 106–107 (GY) contacts pyridoxal 5'-phosphate. H131 lines the substrate pocket. Pyridoxal 5'-phosphate contacts are provided by S176, H204, and T233. An N6-(pyridoxal phosphate)lysine modification is found at K236. Residue T350 participates in substrate binding.

The protein belongs to the class-II pyridoxal-phosphate-dependent aminotransferase family. BioF subfamily. Homodimer. Pyridoxal 5'-phosphate is required as a cofactor.

The catalysed reaction is 6-carboxyhexanoyl-[ACP] + L-alanine + H(+) = (8S)-8-amino-7-oxononanoate + holo-[ACP] + CO2. It participates in cofactor biosynthesis; biotin biosynthesis. Its function is as follows. Catalyzes the decarboxylative condensation of pimeloyl-[acyl-carrier protein] and L-alanine to produce 8-amino-7-oxononanoate (AON), [acyl-carrier protein], and carbon dioxide. The polypeptide is 8-amino-7-oxononanoate synthase (Pseudomonas savastanoi pv. phaseolicola (strain 1448A / Race 6) (Pseudomonas syringae pv. phaseolicola (strain 1448A / Race 6))).